Here is a 610-residue protein sequence, read N- to C-terminus: DEAD-box ATP-dependent RNA helicase 9, mitochondrial (610 aa).

The N-terminal 66 residues, 1–66, are a transit peptide targeting the mitochondrion; the sequence is MISTVLRRSI…SSPFGVKVRD (66 aa). Residues 116 to 144 carry the Q motif motif; it reads LAIADLGISPEIVKALKGRGIEKLFPIQK. A Helicase ATP-binding domain is found at 147–321; it reads LEPAMEGRDM…KKYLNNPLTI (175 aa). 160–167 contacts ATP; that stretch reads ARTGTGKT. A DEAD box motif is present at residues 269–272; it reads DEAD. A Helicase C-terminal domain is found at 350–494; it reads IIGPLVKEHG…ELPSIAVERG (145 aa). A compositionally biased stretch (gly residues) spans 542-557; sequence SGRSGGGGGSYGGSGG. The segment at 542–610 is disordered; sequence SGRSGGGGGS…FGSNDGKRSY (69 aa). Positions 558–572 are enriched in low complexity; that stretch reads SSSRYSGGSDRSSGF. The span at 573–585 shows a compositional bias: gly residues; that stretch reads GSFGSGGSSGGFG. Residues 586–596 are compositionally biased toward low complexity; the sequence is SDRSSQSSGRS.

This sequence belongs to the DEAD box helicase family. DDX21/DDX50 subfamily.

It is found in the mitochondrion. It catalyses the reaction ATP + H2O = ADP + phosphate + H(+). This is DEAD-box ATP-dependent RNA helicase 9, mitochondrial (RH9) from Arabidopsis thaliana (Mouse-ear cress).